A 1039-amino-acid polypeptide reads, in one-letter code: Isoleucine--tRNA ligase (1039 aa).

Positions 46 to 56 match the 'HIGH' region motif; the sequence is PYCSGAIHLGT. Residues 600-604 carry the 'KMSKS' region motif; the sequence is KMSKS. Lysine 603 lines the ATP pocket.

Belongs to the class-I aminoacyl-tRNA synthetase family. IleS type 2 subfamily. Monomer. Zn(2+) is required as a cofactor.

The protein resides in the cytoplasm. It carries out the reaction tRNA(Ile) + L-isoleucine + ATP = L-isoleucyl-tRNA(Ile) + AMP + diphosphate. Catalyzes the attachment of isoleucine to tRNA(Ile). As IleRS can inadvertently accommodate and process structurally similar amino acids such as valine, to avoid such errors it has two additional distinct tRNA(Ile)-dependent editing activities. One activity is designated as 'pretransfer' editing and involves the hydrolysis of activated Val-AMP. The other activity is designated 'posttransfer' editing and involves deacylation of mischarged Val-tRNA(Ile). The polypeptide is Isoleucine--tRNA ligase (Methanocaldococcus jannaschii (strain ATCC 43067 / DSM 2661 / JAL-1 / JCM 10045 / NBRC 100440) (Methanococcus jannaschii)).